Reading from the N-terminus, the 631-residue chain is Probable potassium transport system protein Kup (631 aa).

A run of 12 helical transmembrane segments spans residues 17-37 (IGLL…SPLY), 56-76 (ILGV…FKYM), 109-129 (MMMV…SMIT), 147-167 (GLDH…FLIQ), 174-194 (IGVL…ALGV), 215-235 (FFII…LALT), 256-276 (WFIL…ALVL), 288-308 (LLAP…ATII), 346-366 (IYIG…VIGF), 378-398 (VAVT…MLML), 403-423 (PLLA…FFAA), and 428-448 (IFQG…LMTT).

The protein belongs to the HAK/KUP transporter (TC 2.A.72) family.

It is found in the cell inner membrane. It catalyses the reaction K(+)(in) + H(+)(in) = K(+)(out) + H(+)(out). Functionally, transport of potassium into the cell. Likely operates as a K(+):H(+) symporter. In Pseudomonas savastanoi pv. phaseolicola (strain 1448A / Race 6) (Pseudomonas syringae pv. phaseolicola (strain 1448A / Race 6)), this protein is Probable potassium transport system protein Kup.